The primary structure comprises 586 residues: Protein BONZAI 2 (586 aa).

Gly2 carries the N-myristoyl glycine lipid modification. 2 C2 domains span residues 25-164 (SAAT…ALEL) and 176-303 (PQHN…NLAL). Positions 62, 68, 121, and 123 each coordinate Ca(2+). One can recognise a VWFA domain in the interval 344-563 (NFMVAIDFTA…SVVEALLAEL (220 aa)).

The protein belongs to the copine family. As to quaternary structure, interacts with BAP1 and BAP2. Requires Ca(2+) as cofactor. Expressed in roots, leaves and stems. Expressed in young growing tissues.

The protein localises to the cell membrane. In terms of biological role, negative regulator of cell death and defense responses. May repress a number of R genes and may have effects in promoting growth and development. May function in membrane trafficking and in fusion of vesicles with plasma membrane. This is Protein BONZAI 2 (BON2) from Arabidopsis thaliana (Mouse-ear cress).